Reading from the N-terminus, the 332-residue chain is 5,10-methylenetetrahydromethanopterin reductase (332 aa).

Belongs to the mer family.

The protein resides in the cytoplasm. It catalyses the reaction 5-methyl-5,6,7,8-tetrahydromethanopterin + oxidized coenzyme F420-(gamma-L-Glu)(n) + H(+) = 5,10-methylenetetrahydromethanopterin + reduced coenzyme F420-(gamma-L-Glu)(n). It participates in metabolic intermediate metabolism; lactate oxidation. Catalyzes the oxidation of methyl-H(4)MPT to methylene-H(4)MPT. This Archaeoglobus fulgidus (strain ATCC 49558 / DSM 4304 / JCM 9628 / NBRC 100126 / VC-16) protein is 5,10-methylenetetrahydromethanopterin reductase.